The sequence spans 196 residues: Rho-related GTP-binding protein RhoB (196 aa).

12–19 (GDGACGKT) serves as a coordination point for GTP. Tyrosine 34 carries O-linked (GlcNAc) tyrosine; by Photorhabdus PAU_02230 glycosylation. Positions 34-42 (YVPTVFENY) match the Effector region motif. Threonine 37 is a glycosylation site ((Microbial infection) O-linked (Glc) threonine; by C.difficile toxins TcdA and TcdB). Asparagine 41 carries the post-translational modification ADP-ribosylasparagine; by botulinum toxin. GTP is bound by residues 59–63 (DTAGQ) and 117–120 (NKKD). Tyrosine 154 is subject to Phosphotyrosine. 2 S-palmitoyl cysteine lipidation sites follow: cysteine 189 and cysteine 192. Cysteine 193 carries the cysteine methyl ester modification. A lipid anchor (S-farnesyl cysteine; in plasma membrane form) is attached at cysteine 193. Cysteine 193 carries S-geranylgeranyl cysteine; in endosomal form lipidation. The propeptide at 194-196 (KVL) is removed in mature form.

It belongs to the small GTPase superfamily. Rho family. As to quaternary structure, binds ROCK1 and ROCK2. Also binds PKN1/PRK1. Interacts with ARGGEF3. Interacts with RTKN. Interacts with AKAP13. Interacts with RIPOR1. Prenylation specifies the subcellular location of RHOB. The farnesylated form is localized to the plasma membrane while the geranylgeranylated form is localized to the endosome. In terms of processing, (Microbial infection) Glycosylated at Tyr-34 by Photorhabdus asymbiotica toxin PAU_02230. Mono-O-GlcNAcylation by PAU_02230 inhibits downstream signaling by an impaired interaction with diverse regulator and effector proteins of Rho and leads to actin disassembly. Post-translationally, (Microbial infection) Glucosylated at Thr-37 by C.difficile toxins TcdA and TcdB in the colonic epithelium. Monoglucosylation completely prevents the recognition of the downstream effector, blocking the GTPases in their inactive form, leading to actin cytoskeleton disruption.

The protein resides in the late endosome membrane. The protein localises to the cell membrane. It is found in the nucleus. It localises to the cleavage furrow. Its function is as follows. Mediates apoptosis in neoplastically transformed cells after DNA damage. Not essential for development but affects cell adhesion and growth factor signaling in transformed cells. Plays a negative role in tumorigenesis as deletion causes tumor formation. Involved in intracellular protein trafficking of a number of proteins. Targets PKN1 to endosomes and is involved in trafficking of the EGF receptor from late endosomes to lysosomes. Also required for stability and nuclear trafficking of AKT1/AKT which promotes endothelial cell survival during vascular development. Serves as a microtubule-dependent signal that is required for the myosin contractile ring formation during cell cycle cytokinesis. Required for genotoxic stress-induced cell death in breast cancer cells. This Homo sapiens (Human) protein is Rho-related GTP-binding protein RhoB (RHOB).